The following is a 209-amino-acid chain: T-cell surface glycoprotein CD8 beta chain (209 aa).

An N-terminal signal peptide occupies residues 1–21; that stretch reads MRPRMWLLLSAQLAALHGNSV. One can recognise an Ig-like V-type domain in the interval 22-131; sequence LQQTPAYIMV…TLIFGTGTQL (110 aa). The Extracellular portion of the chain corresponds to 22–169; it reads LQQTPAYIMV…ETRKGPLCSP (148 aa). Cys-41 and Cys-115 are disulfide-bonded. Residue Asn-101 is glycosylated (N-linked (GlcNAc...) asparagine). Residues 170 to 190 form a helical membrane-spanning segment; sequence ITLSLLVAGILVLLVSLGVAI. The Cytoplasmic segment spans residues 191 to 209; that stretch reads HLYCRQRRARLRFMKQFYK.

Forms disulfide-linked heterodimers with CD8A at the cell surface. Interacts with CD3D; this interaction couples TCR-CD3 with CD8. Interacts with LCK. In terms of processing, phosphorylated as a consequence of T-cell activation. Post-translationally, palmitoylated at the cytoplasmic tail and thereby targets the heterodimer CD8A/CD8B to lipid rafts unlike CD8A homodimers.

The protein resides in the cell membrane. Its function is as follows. Integral membrane glycoprotein that plays an essential role in the immune response and serves multiple functions in responses against both external and internal offenses. In T-cells, functions primarily as a coreceptor for MHC class I molecule:peptide complex. The antigens presented by class I peptides are derived from cytosolic proteins while class II derived from extracellular proteins. Interacts simultaneously with the T-cell receptor (TCR) and the MHC class I proteins presented by antigen presenting cells (APCs). In turn, recruits the Src kinase LCK to the vicinity of the TCR-CD3 complex. A palmitoylation site in the cytoplasmic tail of CD8B chain contributes to partitioning of CD8 into the plasma membrane lipid rafts where signaling proteins are enriched. Once LCK recruited, it initiates different intracellular signaling pathways by phosphorylating various substrates ultimately leading to lymphokine production, motility, adhesion and activation of cytotoxic T-lymphocytes (CTLs). Additionally, plays a critical role in thymic selection of CD8+ T-cells. This Saimiri sciureus (Common squirrel monkey) protein is T-cell surface glycoprotein CD8 beta chain (CD8B).